Reading from the N-terminus, the 213-residue chain is RNA chaperone ProQ (213 aa).

A disordered region spans residues 105–150; the sequence is ESQEKAKAKRAAQTPKAAPAGKAPAKKAPKKVAVPARKTERPAKAA. Low complexity predominate over residues 115–127; the sequence is AAQTPKAAPAGKA.

Belongs to the ProQ family.

The protein localises to the cytoplasm. Its function is as follows. RNA chaperone with significant RNA binding, RNA strand exchange and RNA duplexing activities. This is RNA chaperone ProQ from Shewanella oneidensis (strain ATCC 700550 / JCM 31522 / CIP 106686 / LMG 19005 / NCIMB 14063 / MR-1).